A 63-amino-acid polypeptide reads, in one-letter code: MKVNDRVTVKTDGGPRREGVVLEVEQFSEGVMYLVSLEDYPAGVWFFNEIDSHDGTFVEPLHK.

The protein belongs to the DsrB family.

This Yersinia enterocolitica serotype O:8 / biotype 1B (strain NCTC 13174 / 8081) protein is Protein DsrB.